The following is a 97-amino-acid chain: Large ribosomal subunit protein uL23 (97 aa).

This sequence belongs to the universal ribosomal protein uL23 family. In terms of assembly, part of the 50S ribosomal subunit. Contacts protein L29, and trigger factor when it is bound to the ribosome.

Functionally, one of the early assembly proteins it binds 23S rRNA. One of the proteins that surrounds the polypeptide exit tunnel on the outside of the ribosome. Forms the main docking site for trigger factor binding to the ribosome. The sequence is that of Large ribosomal subunit protein uL23 from Methylococcus capsulatus (strain ATCC 33009 / NCIMB 11132 / Bath).